We begin with the raw amino-acid sequence, 24 residues long: Pyruvate kinase (24 aa).

It belongs to the pyruvate kinase family. As to quaternary structure, homotetramer. Mg(2+) serves as cofactor. It depends on K(+) as a cofactor.

The catalysed reaction is pyruvate + ATP = phosphoenolpyruvate + ADP + H(+). It participates in carbohydrate degradation; glycolysis; pyruvate from D-glyceraldehyde 3-phosphate: step 5/5. This is Pyruvate kinase (pyk) from Clostridium pasteurianum.